The primary structure comprises 278 residues: tRNA uridine(34) hydroxylase (278 aa).

One can recognise a Rhodanese domain in the interval 122–216 (QDPDVVVIDT…YLETIAPEES (95 aa)). The active-site Cysteine persulfide intermediate is the C176.

This sequence belongs to the TrhO family.

The enzyme catalyses uridine(34) in tRNA + AH2 + O2 = 5-hydroxyuridine(34) in tRNA + A + H2O. Catalyzes oxygen-dependent 5-hydroxyuridine (ho5U) modification at position 34 in tRNAs. The polypeptide is tRNA uridine(34) hydroxylase (Synechocystis sp. (strain ATCC 27184 / PCC 6803 / Kazusa)).